Here is a 198-residue protein sequence, read N- to C-terminus: Nucleoid occlusion factor SlmA (198 aa).

The HTH tetR-type domain occupies 10–70; it reads NRREEILQSL…SLIEFIEDSL (61 aa). A DNA-binding region (H-T-H motif) is located at residues 33 to 52; the sequence is TTAKLAASVGVSEAALYRHF. A coiled-coil region spans residues 119–144; sequence DRLQGRINQLFERIEVQLRQVMREKK.

Belongs to the nucleoid occlusion factor SlmA family. In terms of assembly, homodimer. Interacts with FtsZ.

It localises to the cytoplasm. It is found in the nucleoid. In terms of biological role, required for nucleoid occlusion (NO) phenomenon, which prevents Z-ring formation and cell division over the nucleoid. Acts as a DNA-associated cell division inhibitor that binds simultaneously chromosomal DNA and FtsZ, and disrupts the assembly of FtsZ polymers. SlmA-DNA-binding sequences (SBS) are dispersed on non-Ter regions of the chromosome, preventing FtsZ polymerization at these regions. This Klebsiella pneumoniae (strain 342) protein is Nucleoid occlusion factor SlmA.